The primary structure comprises 453 residues: Tol-Pal system protein TolB (453 aa).

The N-terminal stretch at 1–31 is a signal peptide; sequence MINNLSISMTKVIKIILAIIIILFNTLSIFA.

Belongs to the TolB family. The Tol-Pal system is composed of five core proteins: the inner membrane proteins TolA, TolQ and TolR, the periplasmic protein TolB and the outer membrane protein Pal. They form a network linking the inner and outer membranes and the peptidoglycan layer.

It is found in the periplasm. Functionally, part of the Tol-Pal system, which plays a role in outer membrane invagination during cell division and is important for maintaining outer membrane integrity. This chain is Tol-Pal system protein TolB, found in Orientia tsutsugamushi (strain Ikeda) (Rickettsia tsutsugamushi).